The following is a 330-amino-acid chain: Olfactory receptor 5P70 (330 aa).

Residues 1–28 (MAFLEDGNHTIVTEFILLGLTDDPVLRD) lie on the Extracellular side of the membrane. N-linked (GlcNAc...) asparagine glycosylation is present at Asn8. The helical transmembrane segment at 29–49 (ILFTIILCIYLVTVSGNLSTI) threads the bilayer. Topologically, residues 50-57 (LLIRVSSQ) are cytoplasmic. A helical transmembrane segment spans residues 58 to 78 (LHHPMYFFLSHLASVDIGISS). Topologically, residues 79 to 102 (SVTPNMLANFLVKPNTISYIGCSI) are extracellular. A disulfide bridge connects residues Cys100 and Cys192. Residues 103-123 (QFTSAVFLATVECFLLAAMAY) form a helical membrane-spanning segment. Residues 124–136 (DRFVAICNPLLYS) are Cytoplasmic-facing. The helical transmembrane segment at 137-157 (TKMSREACIQLVVGSYIQGLL) threads the bilayer. The Extracellular portion of the chain corresponds to 158–199 (NASFFTLSFFSLIFCGPNRINHFYCDLAPLVELSCSDVTLAV). Residues 200-220 (VITSISAGFITLTTVFVIAIS) form a helical membrane-spanning segment. Residues 221-240 (YSCIFITIMKMHSTESRYKA) lie on the Cytoplasmic side of the membrane. The helical transmembrane segment at 241–261 (FSTCTSHLTAVTLFYGTTMFI) threads the bilayer. The Extracellular segment spans residues 262–274 (YVMPKSSYSTDQN). The helical transmembrane segment at 275 to 295 (KVLSVFYMVVIPMLNPLIYSL) threads the bilayer. Residues 296 to 330 (RNNEIKGALKRYLGKKIFSYGNLFCKTHYNDTHQV) are Cytoplasmic-facing.

It belongs to the G-protein coupled receptor 1 family.

The protein resides in the cell membrane. Functionally, potential odorant receptor. This chain is Olfactory receptor 5P70, found in Mus musculus (Mouse).